Reading from the N-terminus, the 708-residue chain is Soluble guanylate cyclase gcy-37 (708 aa).

Residue histidine 105 participates in heme binding. Positions 368 to 409 (LNQSRICQMELNKKLEETMKKMKKMTEELEVKKSQTDRLLFE) form a coiled coil. The Guanylate cyclase domain maps to 434-562 (SVIFTDIPDF…NTVNVTKSIC (129 aa)). Mg(2+) is bound by residues aspartate 439 and aspartate 483.

The protein belongs to the adenylyl cyclase class-4/guanylyl cyclase family. In terms of assembly, heterodimer; with other soluble guanylate cyclases. It depends on heme as a cofactor. In terms of tissue distribution, expressed in a small number of neurons, corresponding to URX, AQR and PQR neurons.

It is found in the cytoplasm. The catalysed reaction is GTP = 3',5'-cyclic GMP + diphosphate. Its activity is regulated as follows. May be regulated by molecular oxygen. Probably not activated by nitric oxide (NO). Synthesizes cyclic GMP (cGMP) from GTP. May play a role in sensory neurons. The sequence is that of Soluble guanylate cyclase gcy-37 (gcy-37) from Caenorhabditis elegans.